Here is a 362-residue protein sequence, read N- to C-terminus: Oryzain gamma chain (362 aa).

A signal peptide spans 1 to 24 (MAHRRIILLLAAAAVAATSAVAAA). The propeptide at 25–144 (SSGFDDSNPI…GNHRMRDAAA (120 aa)) is activation peptide. An N-linked (GlcNAc...) asparagine glycan is attached at asparagine 128. 2 cysteine pairs are disulfide-bonded: cysteine 166-cysteine 209 and cysteine 200-cysteine 242. Cysteine 169 is a catalytic residue. The N-linked (GlcNAc...) asparagine glycan is linked to asparagine 258. Cysteine 300 and cysteine 350 are disulfide-bonded. Residues histidine 309 and asparagine 329 contribute to the active site.

The protein belongs to the peptidase C1 family. As to expression, expressed only in seeds.

The sequence is that of Oryzain gamma chain from Oryza sativa subsp. japonica (Rice).